A 368-amino-acid polypeptide reads, in one-letter code: Transcription factor TGA1 (368 aa).

Over residues leucine 53–threonine 65 the composition is skewed to polar residues. The segment at leucine 53–aspartate 83 is disordered. One can recognise a bZIP domain in the interval proline 82–phenylalanine 145. Coiled coils occupy residues aspartate 83–glycine 131 and asparagine 261–glutamine 281. Positions lysine 84–lysine 104 are basic motif. The segment at leucine 110–leucine 124 is leucine-zipper. Residues isoleucine 153–arginine 363 form the DOG1 domain. The cysteines at positions 260 and 266 are disulfide-linked.

Belongs to the bZIP family. In terms of assembly, binds DNA as a dimer. The reduced form interacts with NPR1. Predominantly expressed in roots.

It is found in the nucleus. Its function is as follows. Transcriptional activator that binds specifically to the DNA sequence 5'-TGACG-3'. Recognizes ocs elements like the as-1 motif of the cauliflower mosaic virus 35S promoter. Binding to the as-1-like cis elements mediate auxin- and salicylic acid-inducible transcription. May be involved in the induction of the systemic acquired resistance (SAR) via its interaction with NPR1. Could also bind to the Hex-motif (5'-TGACGTGG-3') another cis-acting element found in plant histone promoters. This chain is Transcription factor TGA1 (TGA1), found in Arabidopsis thaliana (Mouse-ear cress).